The chain runs to 1452 residues: ABC multidrug transporter A-1 (1452 aa).

The interval 1-20 is disordered; sequence MNESHEAGKNSSTNVEEREE. N-linked (GlcNAc...) asparagine glycosylation is found at N2, N10, N228, N287, and N311. Residues 110–363 enclose the ABC transporter 1 domain; it reads LKTLSLARIA…FLQMGFVCPD (254 aa). 6 consecutive transmembrane segments (helical) span residues 474 to 494, 508 to 528, 554 to 574, 583 to 603, 616 to 636, and 725 to 745; these read VTIS…SIFY, ALLF…MLTL, MIMD…VLYF, GAFF…SMFF, VLPF…FAIP, and IGVI…ATDF. Positions 802-1044 constitute an ABC transporter 2 domain; that stretch reads FQWKDVCFDI…ILIDYFVRNG (243 aa). 838–845 serves as a coordination point for ATP; it reads GVSGAGKT. A run of 6 helical transmembrane segments spans residues 1153-1173, 1183-1203, 1223-1243, 1271-1291, 1297-1317, and 1324-1344; these read ALCV…PNTI, IFML…HFVA, FLIA…VLMF, LMIW…IAAF, AGNL…VLAT, and FWIF…MLSV. N1350, N1365, and N1391 each carry an N-linked (GlcNAc...) asparagine glycan. A helical membrane pass occupies residues 1418–1438; that stretch reads FGLMWVFIVFNIFAACSLYWW.

It belongs to the ABC transporter superfamily. ABCG family. PDR (TC 3.A.1.205) subfamily.

It localises to the membrane. ABC transporter that seems not to be involved in the efflux of toxic substances, at least not the classical compounds such as itraconazole, amphotericin B, voriconazole, posaconazole, ravuconazole, or echinocandins. This chain is ABC multidrug transporter A-1, found in Aspergillus fumigatus (strain ATCC MYA-4609 / CBS 101355 / FGSC A1100 / Af293) (Neosartorya fumigata).